The following is a 557-amino-acid chain: Calcium-dependent protein kinase 4 (557 aa).

The disordered stretch occupies residues 1–72; sequence MGNTCRGSIG…LVSPRKASMN (72 aa). Residue glycine 2 is the site of N-myristoyl glycine attachment. Over residues 15–27 the composition is skewed to polar residues; it reads QGYTQPEDSSCST. Positions 28-48 are enriched in low complexity; that stretch reads NHNPSSGNSYSSSDNFSPTSN. Positions 94–352 constitute a Protein kinase domain; sequence YTLGRKLGQG…AHEVLCHPWI (259 aa). ATP-binding positions include 100-108 and lysine 123; that span reads LGQGQFGTT. The Proton acceptor role is filled by aspartate 218. An autoinhibitory domain region spans residues 358-388; the sequence is APDRALDPAVLSRLKQFSAMNKLKKMALRVI. EF-hand domains are found at residues 395-430, 431-466, 467-502, and 506-536; these read EEIA…YGST, LKDT…LNKL, EREE…HNMT, and FEDI…GNPC. Aspartate 408, aspartate 410, serine 412, glutamate 419, aspartate 444, aspartate 446, serine 448, threonine 450, glutamate 455, aspartate 480, aspartate 482, serine 484, tyrosine 486, glutamate 491, aspartate 514, aspartate 516, aspartate 518, arginine 520, and glutamate 525 together coordinate Ca(2+).

This sequence belongs to the protein kinase superfamily. Ser/Thr protein kinase family. CDPK subfamily.

The protein localises to the membrane. The enzyme catalyses L-seryl-[protein] + ATP = O-phospho-L-seryl-[protein] + ADP + H(+). It carries out the reaction L-threonyl-[protein] + ATP = O-phospho-L-threonyl-[protein] + ADP + H(+). With respect to regulation, activated by calcium. Autophosphorylation may play an important role in the regulation of the kinase activity. Regulates the production of reactive oxygen species (ROS) by NADPH oxidase. This chain is Calcium-dependent protein kinase 4 (CPK4), found in Solanum tuberosum (Potato).